The following is a 364-amino-acid chain: 3-isopropylmalate dehydrogenase (364 aa).

79–90 (GPKWGTGSVRPE) contributes to the NAD(+) binding site. Residues R97, R107, R136, and D225 each contribute to the substrate site. 3 residues coordinate Mg(2+): D225, D250, and D254. Residue 289–300 (GSAPDLPKNKVN) coordinates NAD(+).

The protein belongs to the isocitrate and isopropylmalate dehydrogenases family. In terms of assembly, homodimer. It depends on Mg(2+) as a cofactor. The cofactor is Mn(2+).

The protein resides in the cytoplasm. The catalysed reaction is (2R,3S)-3-isopropylmalate + NAD(+) = 4-methyl-2-oxopentanoate + CO2 + NADH. Its pathway is amino-acid biosynthesis; L-leucine biosynthesis; L-leucine from 3-methyl-2-oxobutanoate: step 3/4. Its function is as follows. Catalyzes the oxidation of 3-carboxy-2-hydroxy-4-methylpentanoate (3-isopropylmalate) to 3-carboxy-4-methyl-2-oxopentanoate. The product decarboxylates to 4-methyl-2 oxopentanoate. The protein is 3-isopropylmalate dehydrogenase (LEU2) of Saccharomyces cerevisiae (strain ATCC 204508 / S288c) (Baker's yeast).